We begin with the raw amino-acid sequence, 179 residues long: UPF0227 protein VIBHAR_01524 (179 aa).

Belongs to the UPF0227 family.

The chain is UPF0227 protein VIBHAR_01524 from Vibrio campbellii (strain ATCC BAA-1116).